We begin with the raw amino-acid sequence, 392 residues long: MSRAFIIDPTISAIDGLYDLLGIGIPNQGGILYSSLEYFEKALEELAAAFPGDGWLGSAADKYAGKNRNHVNFFQELADLDRQLISLIHDQANAVQTTRDILEGAKKGLEFVRPVAVDLTYIPVVGHALSAAFQAPFCAGAMAVVGGALAYLVVKTLINATQLLKLLAKLAELVAAAIADIISDVADIIKGILGEVWEFITNALNGLKELWDKLTGWVTGLFSRGWSNLESFFAGVPGLTGATSGLSQVTGLFGAAGLSASSGLAHADSLASSASLPALAGIGGGSGFGGLPSLAQVHAASTRQALRPRADGPVGAAAEQVGGQSQLVSAQGSQGMGGPVGMGGMHPSSGASKGTTTKKYSEGAAAGTEDAERAPVEADAGGGQKVLVRNVV.

Positions 302–392 are disordered; that stretch reads TRQALRPRAD…GQKVLVRNVV (91 aa). The span at 334–344 shows a compositional bias: gly residues; the sequence is QGMGGPVGMGG.

As to quaternary structure, homodimer; disulfide-linked.

The protein localises to the secreted. In terms of biological role, required for secretion of EsxA (ESAT-6) and EsxB (CFP-10) and for virulence. The polypeptide is ESX-1 secretion-associated protein EspA (Mycobacterium tuberculosis (strain CDC 1551 / Oshkosh)).